A 260-amino-acid polypeptide reads, in one-letter code: Dehydrogenase/reductase SDR family member 4 (260 aa).

14–38 (IVTAATKGIGLAIAERLLDEGASVV) contributes to the NADP(+) binding site. Residue Ser148 participates in substrate binding. Tyr161 functions as the Proton acceptor in the catalytic mechanism. Lys165 contributes to the NADP(+) binding site.

Belongs to the short-chain dehydrogenases/reductases (SDR) family.

It catalyses the reaction a secondary alcohol + NADP(+) = a ketone + NADPH + H(+). Its function is as follows. Catalyzes the reduction of isatin, 4-oxonon-2-enal, 9,10-phenanthrenequinone, menadione, 2,3-hexaenadione, 3,4-hexanedione and 2,3-heptanedione. This is Dehydrogenase/reductase SDR family member 4 from Caenorhabditis elegans.